The chain runs to 249 residues: ATP-dependent dethiobiotin synthetase BioD (249 aa).

11–16 (NVGKTI) contributes to the ATP binding site. Position 15 (threonine 15) interacts with Mg(2+). The active site involves lysine 31. Residue threonine 35 participates in substrate binding. ATP is bound by residues aspartate 40, 127–130 (EGAG), 188–189 (NS), and 215–217 (PYL). Mg(2+) contacts are provided by aspartate 40 and glutamate 127.

The protein belongs to the dethiobiotin synthetase family. As to quaternary structure, homodimer. Mg(2+) is required as a cofactor.

Its subcellular location is the cytoplasm. It catalyses the reaction (7R,8S)-7,8-diammoniononanoate + CO2 + ATP = (4R,5S)-dethiobiotin + ADP + phosphate + 3 H(+). It functions in the pathway cofactor biosynthesis; biotin biosynthesis; biotin from 7,8-diaminononanoate: step 1/2. Functionally, catalyzes a mechanistically unusual reaction, the ATP-dependent insertion of CO2 between the N7 and N8 nitrogen atoms of 7,8-diaminopelargonic acid (DAPA, also called 7,8-diammoniononanoate) to form a ureido ring. The polypeptide is ATP-dependent dethiobiotin synthetase BioD (Neorickettsia sennetsu (strain ATCC VR-367 / Miyayama) (Ehrlichia sennetsu)).